Here is a 306-residue protein sequence, read N- to C-terminus: Pseudouridine-5'-phosphate glycosidase (306 aa).

E27 acts as the Proton donor in catalysis. Substrate is bound by residues K88 and V108. Residue D140 coordinates Mn(2+). Residue 142–144 (SAD) participates in substrate binding. K161 serves as the catalytic Nucleophile.

The protein belongs to the pseudouridine-5'-phosphate glycosidase family. In terms of assembly, homotrimer. Mn(2+) is required as a cofactor.

It carries out the reaction D-ribose 5-phosphate + uracil = psi-UMP + H2O. Its function is as follows. Catalyzes the reversible cleavage of pseudouridine 5'-phosphate (PsiMP) to ribose 5-phosphate and uracil. Functions biologically in the cleavage direction, as part of a pseudouridine degradation pathway. The sequence is that of Pseudouridine-5'-phosphate glycosidase from Petrotoga mobilis (strain DSM 10674 / SJ95).